A 421-amino-acid polypeptide reads, in one-letter code: Testin (421 aa).

Residues 92 to 199 (MILTNPVAAK…GDVKLPREMD (108 aa)) form the PET domain. A disordered region spans residues 133–164 (EKQPVAGSEGAQYRKKQLAKQLPAHDQDPSKC). Basic and acidic residues predominate over residues 155 to 164 (PAHDQDPSKC). LIM zinc-binding domains are found at residues 234–297 (YSCY…CDSE), 299–359 (PRCA…NHAV), and 362–421 (QGCH…KMMS).

It belongs to the prickle / espinas / testin family. Interacts via LIM domain 1 with ZYX. Interacts (via LIM domain 3) with ENAH and VASP. Interacts with ALKBH4, talin, actin, alpha-actinin, GRIP1 and PXN. Interacts (via LIM domain 2) with ACTL7A (via N-terminus). Heterodimer with ACTL7A; the heterodimer interacts with ENAH to form a heterotrimer.

Its subcellular location is the cytoplasm. The protein resides in the cell junction. It is found in the focal adhesion. In terms of biological role, scaffold protein that may play a role in cell adhesion, cell spreading and in the reorganization of the actin cytoskeleton. Plays a role in the regulation of cell proliferation. May act as a tumor suppressor. The chain is Testin (TES) from Mustela putorius furo (European domestic ferret).